A 173-amino-acid polypeptide reads, in one-letter code: Photosystem I assembly protein Ycf3 (173 aa).

3 TPR repeats span residues 35-68, 72-105, and 120-153; these read AFSYYRDGMSAQAEGEYAEALQNYYEAMRLEIDP, SYILYNIGLIHTSNGEHGKALEYYYQAIERNPSL, and GEQAIEEGNIATSEILFNQAASYWKQAIRLAPNS.

It belongs to the Ycf3 family.

Its subcellular location is the plastid. It localises to the chloroplast thylakoid membrane. In terms of biological role, essential for the assembly of the photosystem I (PSI) complex. May act as a chaperone-like factor to guide the assembly of the PSI subunits. The sequence is that of Photosystem I assembly protein Ycf3 from Mesostigma viride (Green alga).